We begin with the raw amino-acid sequence, 636 residues long: Threonine--tRNA ligase (636 aa).

The region spanning 1–59 (MPIITLPDGTKKIFEQVVSVEQVAKSMGLVKAALAGEVDGELVSTSFLIKTDANLTIIT) is the TGS domain. Residues 240–531 (DHRKIGKTQD…LIEHYEGAYP (292 aa)) are catalytic. 3 residues coordinate Zn(2+): cysteine 331, histidine 382, and histidine 508.

It belongs to the class-II aminoacyl-tRNA synthetase family. As to quaternary structure, homodimer. Requires Zn(2+) as cofactor.

The protein resides in the cytoplasm. It catalyses the reaction tRNA(Thr) + L-threonine + ATP = L-threonyl-tRNA(Thr) + AMP + diphosphate + H(+). Catalyzes the attachment of threonine to tRNA(Thr) in a two-step reaction: L-threonine is first activated by ATP to form Thr-AMP and then transferred to the acceptor end of tRNA(Thr). Also edits incorrectly charged L-seryl-tRNA(Thr). This chain is Threonine--tRNA ligase, found in Vesicomyosocius okutanii subsp. Calyptogena okutanii (strain HA).